We begin with the raw amino-acid sequence, 239 residues long: Ion-translocating oxidoreductase complex subunit E (239 aa).

5 consecutive transmembrane segments (helical) span residues 41-61 (LGLG…VSLV), 71-91 (LPAF…LMQA), 95-115 (ELYQ…VILG), 130-150 (SFDG…LGGL), and 184-204 (GFLL…LIAL).

It belongs to the NqrDE/RnfAE family. The complex is composed of six subunits: RnfA, RnfB, RnfC, RnfD, RnfE and RnfG.

The protein resides in the cell inner membrane. Part of a membrane-bound complex that couples electron transfer with translocation of ions across the membrane. This chain is Ion-translocating oxidoreductase complex subunit E, found in Pseudomonas paraeruginosa (strain DSM 24068 / PA7) (Pseudomonas aeruginosa (strain PA7)).